The chain runs to 273 residues: Dermonecrotic toxin LhSicTox-alphaIA2biv (273 aa).

Residue His5 is part of the active site. Residues Glu25 and Asp27 each coordinate Mg(2+). His41 serves as the catalytic Nucleophile. Disulfide bonds link Cys45–Cys51 and Cys47–Cys190. Asp85 is a Mg(2+) binding site.

It belongs to the arthropod phospholipase D family. Class II subfamily. Mg(2+) is required as a cofactor. In terms of tissue distribution, expressed by the venom gland.

The protein resides in the secreted. The enzyme catalyses an N-(acyl)-sphingosylphosphocholine = an N-(acyl)-sphingosyl-1,3-cyclic phosphate + choline. It carries out the reaction an N-(acyl)-sphingosylphosphoethanolamine = an N-(acyl)-sphingosyl-1,3-cyclic phosphate + ethanolamine. It catalyses the reaction a 1-acyl-sn-glycero-3-phosphocholine = a 1-acyl-sn-glycero-2,3-cyclic phosphate + choline. The catalysed reaction is a 1-acyl-sn-glycero-3-phosphoethanolamine = a 1-acyl-sn-glycero-2,3-cyclic phosphate + ethanolamine. Dermonecrotic toxins cleave the phosphodiester linkage between the phosphate and headgroup of certain phospholipids (sphingolipid and lysolipid substrates), forming an alcohol (often choline) and a cyclic phosphate. This toxin acts on sphingomyelin (SM). It may also act on ceramide phosphoethanolamine (CPE), lysophosphatidylcholine (LPC) and lysophosphatidylethanolamine (LPE), but not on lysophosphatidylserine (LPS), and lysophosphatidylglycerol (LPG). It acts by transphosphatidylation, releasing exclusively cyclic phosphate products as second products. Induces dermonecrosis, hemolysis, increased vascular permeability, edema, inflammatory response, and platelet aggregation. This is Dermonecrotic toxin LhSicTox-alphaIA2biv from Loxosceles hirsuta (Recluse spider).